The chain runs to 369 residues: Peptide chain release factor 2 (369 aa).

Residue glutamine 249 is modified to N5-methylglutamine.

The protein belongs to the prokaryotic/mitochondrial release factor family. Methylated by PrmC. Methylation increases the termination efficiency of RF2.

Its subcellular location is the cytoplasm. Functionally, peptide chain release factor 2 directs the termination of translation in response to the peptide chain termination codons UGA and UAA. In Thermosipho africanus (strain TCF52B), this protein is Peptide chain release factor 2.